We begin with the raw amino-acid sequence, 172 residues long: MAESELMHIHSLAEHYLQYVLQVPAFESAPSQACRVLQRVAFSVQKEVEKNLKSYLDDFHVESIDTARIIFNQVMEKEFEDGIINWGRIVTIFAFGGVLLKKLPQEQIALDVCAYKQVSSFVAEFIMNNTGEWIRQNGGWEDGFIKKFEPKSGWLTFLQMTGQIWEMLFLLK.

The BH1 signature appears at 77–97; the sequence is KEFEDGIINWGRIVTIFAFGG. Residues 132 to 147 carry the BH2 motif; that stretch reads EWIRQNGGWEDGFIKK.

It belongs to the Bcl-2 family. In terms of assembly, interacts directly with BCL2L11/BIM and PMAIP1. Interacts directly with BAK1, BID, BMF and BBC3. Interacts with BOP. Interacts with isoform 3, isoform 4 and isoform 5 of ING4. Interacts with UBQLN4. Expressed in hemopoietic tissues, including bone marrow, spleen and thymus.

The protein localises to the cytoplasm. Its function is as follows. Retards apoptosis induced by IL-3 deprivation. May function in the response of hemopoietic cells to external signals and in maintaining endothelial survival during infection. Can inhibit apoptosis induced by serum starvation in the mammary epithelial cell line HC11. This Mus musculus (Mouse) protein is Bcl-2-related protein A1 (Bcl2a1).